We begin with the raw amino-acid sequence, 665 residues long: DNA ligase (665 aa).

Residues 31–35 (DQEFD), 80–81 (SL), and Glu-110 contribute to the NAD(+) site. Catalysis depends on Lys-112, which acts as the N6-AMP-lysine intermediate. The NAD(+) site is built by Arg-133, Glu-170, Lys-285, and Lys-309. Cys-403, Cys-406, Cys-421, and Cys-427 together coordinate Zn(2+). The BRCT domain occupies 587–665 (EHTDKLAGKS…SEEEFLQMIE (79 aa)).

This sequence belongs to the NAD-dependent DNA ligase family. LigA subfamily. Mg(2+) serves as cofactor. It depends on Mn(2+) as a cofactor.

It catalyses the reaction NAD(+) + (deoxyribonucleotide)n-3'-hydroxyl + 5'-phospho-(deoxyribonucleotide)m = (deoxyribonucleotide)n+m + AMP + beta-nicotinamide D-nucleotide.. In terms of biological role, DNA ligase that catalyzes the formation of phosphodiester linkages between 5'-phosphoryl and 3'-hydroxyl groups in double-stranded DNA using NAD as a coenzyme and as the energy source for the reaction. It is essential for DNA replication and repair of damaged DNA. This chain is DNA ligase, found in Phocaeicola vulgatus (strain ATCC 8482 / DSM 1447 / JCM 5826 / CCUG 4940 / NBRC 14291 / NCTC 11154) (Bacteroides vulgatus).